Here is a 309-residue protein sequence, read N- to C-terminus: tRNA-dihydrouridine(16) synthase (309 aa).

Residues 7–9 and Gln-68 contribute to the FMN site; that span reads PME. Cys-98 serves as the catalytic Proton donor. FMN-binding positions include Arg-137, Asn-198, and 220–221; that span reads GC.

The protein belongs to the Dus family. DusC subfamily. FMN serves as cofactor.

It carries out the reaction 5,6-dihydrouridine(16) in tRNA + NADP(+) = uridine(16) in tRNA + NADPH + H(+). The catalysed reaction is 5,6-dihydrouridine(16) in tRNA + NAD(+) = uridine(16) in tRNA + NADH + H(+). In terms of biological role, catalyzes the synthesis of 5,6-dihydrouridine (D), a modified base found in the D-loop of most tRNAs, via the reduction of the C5-C6 double bond in target uridines. Specifically modifies U16 in tRNAs. This Azotobacter vinelandii protein is tRNA-dihydrouridine(16) synthase.